The following is an 85-amino-acid chain: Small ribosomal subunit protein uS17 (85 aa).

Belongs to the universal ribosomal protein uS17 family. As to quaternary structure, part of the 30S ribosomal subunit.

Its function is as follows. One of the primary rRNA binding proteins, it binds specifically to the 5'-end of 16S ribosomal RNA. The chain is Small ribosomal subunit protein uS17 from Pseudoalteromonas translucida (strain TAC 125).